A 411-amino-acid chain; its full sequence is Adenylosuccinate synthetase (411 aa).

Residues 11–17 (GDEGKGK) and 39–41 (GHT) contribute to the GTP site. D12 (proton acceptor) is an active-site residue. The Mg(2+) site is built by D12 and G39. IMP-binding positions include 12–15 (DEGK), 37–40 (NAGH), T121, R135, Q215, T230, and R294. The Proton donor role is filled by H40. Residue 290-296 (TTTKRPR) coordinates substrate. Residues R296, 322-324 (KLD), and 400-402 (STS) contribute to the GTP site.

The protein belongs to the adenylosuccinate synthetase family. Homodimer. Mg(2+) serves as cofactor.

It is found in the cytoplasm. It carries out the reaction IMP + L-aspartate + GTP = N(6)-(1,2-dicarboxyethyl)-AMP + GDP + phosphate + 2 H(+). Its pathway is purine metabolism; AMP biosynthesis via de novo pathway; AMP from IMP: step 1/2. Plays an important role in the de novo pathway of purine nucleotide biosynthesis. Catalyzes the first committed step in the biosynthesis of AMP from IMP. This is Adenylosuccinate synthetase from Helicobacter pylori (strain P12).